We begin with the raw amino-acid sequence, 439 residues long: Divalent metal cation transporter MntH (439 aa).

Transmembrane regions (helical) follow at residues 32–52, 67–87, 121–141, 144–164, 173–193, 214–234, 261–281, 301–321, 350–370, 371–391, and 406–426; these read GASM…AYMD, GYAL…FQSL, IAAM…LSLL, MPLL…LLLE, LAIG…LFIT, ALLI…LFLH, VVVA…MAAG, APLL…ASGI, AVTM…TQAL, VLSQ…LLWF, and FIAV…AVLI.

This sequence belongs to the NRAMP family.

It localises to the cell inner membrane. In terms of biological role, h(+)-stimulated, divalent metal cation uptake system. The chain is Divalent metal cation transporter MntH from Verminephrobacter eiseniae (strain EF01-2).